A 362-amino-acid chain; its full sequence is Ferrochelatase (362 aa).

Fe cation-binding residues include His-228 and Glu-309.

The protein belongs to the ferrochelatase family.

It is found in the cytoplasm. The catalysed reaction is heme b + 2 H(+) = protoporphyrin IX + Fe(2+). The protein operates within porphyrin-containing compound metabolism; protoheme biosynthesis; protoheme from protoporphyrin-IX: step 1/1. Functionally, catalyzes the ferrous insertion into protoporphyrin IX. This Bordetella parapertussis (strain 12822 / ATCC BAA-587 / NCTC 13253) protein is Ferrochelatase.